The primary structure comprises 21 residues: Fibrinogen beta chain (21 aa).

Gln1 carries the post-translational modification Pyrrolidone carboxylic acid. A Sulfotyrosine modification is found at Tyr6.

As to quaternary structure, heterohexamer; disulfide linked. Contains 2 sets of 3 non-identical chains (alpha, beta and gamma). The 2 heterotrimers are in head to head conformation with the N-termini in a small central domain. Conversion of fibrinogen to fibrin is triggered by thrombin, which cleaves fibrinopeptides A and B from alpha and beta chains, and thus exposes the N-terminal polymerization sites responsible for the formation of the soft clot.

It is found in the secreted. Functionally, cleaved by the protease thrombin to yield monomers which, together with fibrinogen alpha (FGA) and fibrinogen gamma (FGG), polymerize to form an insoluble fibrin matrix. Fibrin has a major function in hemostasis as one of the primary components of blood clots. In addition, functions during the early stages of wound repair to stabilize the lesion and guide cell migration during re-epithelialization. Was originally thought to be essential for platelet aggregation, based on in vitro studies using anticoagulated blood. However subsequent studies have shown that it is not absolutely required for thrombus formation in vivo. Enhances expression of SELP in activated platelets. Maternal fibrinogen is essential for successful pregnancy. Fibrin deposition is also associated with infection, where it protects against IFNG-mediated hemorrhage. May also facilitate the antibacterial immune response via both innate and T-cell mediated pathways. The sequence is that of Fibrinogen beta chain (FGB) from Odocoileus hemionus (Mule deer).